Consider the following 303-residue polypeptide: Methyltransferase ktnA (303 aa).

It belongs to the class I-like SAM-binding methyltransferase superfamily. It depends on S-adenosyl-L-methionine as a cofactor.

Functionally, non-reducing polyketide synthase; part of the gene cluster that mediates the biosynthesis of the bicoumarin kotanin. The non-reducing polyketide synthase ktnS first catalyzes the formation of the pentaketidic 4,7-dihydroxy-5-methylcoumarin from acetyl coenzyme A and 4 malonyl coenzyme A molecules. Further O-methylation by ktnB leads to the formation of 7-demethylsiderin. Then, an oxidative phenol coupling catalyzed by the cytochrome P450 monooxygenase ktnC forms the 8,8'-dimer P-orlandin via dimerization the monomeric precursor, 7-demethylsiderin. P-orlandin is subsequently O-methylated in a stepwise fashion to demethylkotanin and kotanin. The function of ktnA within the pathway has not been determined yet. This is Methyltransferase ktnA from Aspergillus niger (strain ATCC MYA-4892 / CBS 513.88 / FGSC A1513).